Consider the following 125-residue polypeptide: Prefoldin subunit beta (125 aa).

Belongs to the prefoldin subunit beta family. In terms of assembly, heterohexamer of two alpha and four beta subunits.

The protein resides in the cytoplasm. Functionally, molecular chaperone capable of stabilizing a range of proteins. Seems to fulfill an ATP-independent, HSP70-like function in archaeal de novo protein folding. This Halobacterium salinarum (strain ATCC 29341 / DSM 671 / R1) protein is Prefoldin subunit beta.